We begin with the raw amino-acid sequence, 1441 residues long: MICILVLITVAAASPVYQRCFQDGAIVKQNPSKEAVTEVCLKDDVSMIKTEARYVRNATGVFSNNVAIRKWLVSDWHDCRPKKIVGGHINVIEVGDDLSLHTESYVCSADCTIGVDKETAQVRLQTDTTNHFEIAGTTVKSGWFKSTTYITLDQTCEHLKVSCGPKSVQFHACFNQHMSCVRFLHRTILPGSIANSICQNIEIIILVTLTLLIFILLSILSKTYICYLLMPIFIPIAYIYGIIYNKSCKKCKLCGLVYHPFTECGTHCVCGARYDTSDRMKLHRASGLCPGYKSLRAARVMCKSKGPASILSIITAVLVLTFVTPINSMVLGESKETFELEDLPDDMLEMASRINSYYLTCILNYAVSWGLVIIGLLIGLLFKKYQHRFLNVYAMYCEECDMYHDKSGLKRHGDFTNKCRQCTCGQYEDAAGLMAHRKTYNCLVQYKAKWMMNFLIIYIFLILIKDSAIVVQAAGTDFTTCLETESINWNCTGPFLNLGNCQKQQKKEPYTNIATQLKGLKAISVLDVPIITGIPDDIAGALRYIEEKEDFHVQLTIEYAMLSKYCDYYTQFSDNSGYSQTTWRVYLRSHDFEACILYPNQHFCRCVKNGEKCSSSNWDFANEMKDYYSGKQTKFDKDLNLALTALHHAFRGTSSAYIATMLSKKSNDDLIAYTNKIKTKFPGNALLKAIIDYIAYMKSLPGMANFKYDEFWDELLYKPNPAKASNLARGKESSYNFKLAISSKSIKTCKNVKDVACLSPRSGAIYASIIACGEPNGPSVYRKPSGGVFQSSTDRSIYCLLDSHCLEEFEAIGQEELDAVKKSKCWEIEYPDVKLIQEGDGTKSCRMKDSGNCNVATNRWPVIQCENDKFYYSELQKDYDKAQDIGHYCLSPGCTTVRYPINPKHISNCNWQVSRSSIAKIDVHNIEDIEQYKKAITQKLQTSLSLFKYAKTKNLPHIKPIYKYITIEGTETAEGIESAYIESEVPALAGTSIGFKINSKEGKHLLDVIAYVKSASYSSVYTKLYSTGPTSGINTKHDELCTGPCPANINHQVGWLTFARERTSSWGCEEFGCLAVSDGCVFGSCQDIIKEELSVYRKETEEVTDVELCLTFSDKTYCTNLNPVTPIITDLFEVQFKTVETYSLPRIVAVQNHEIKIGQINDLGVYSKGCGNVQKVNGTIYGNGVPRFDYLCHLASRKEVIVRKCFDNDYQACKFLQSPASYRLEEDSGTVTIIDYKKILGTIKMKAILGDVKYKTFADSVDITAEGSCTGCINCFENIHCELTLHTTIEASCPIKSSCTVFHDRILVTPNEHKYALKMVCTEKPGNTLTIKVCNTKVEASMALVDAKPIIELAPVDQTAYIREKDERCKTWMCRVRDEGLQVILEPFKNLFGSYIGIFYTFIISIVVLLVIIYVLLPICFKLRDTLRKHEDAYKREMKIR.

The first 13 residues, Met-1–Ala-13, serve as a signal peptide directing secretion. Over Ser-14–Asn-200 the chain is Lumenal. Asn-57 carries N-linked (GlcNAc...) asparagine; by host glycosylation. At Ile-201 to Ser-221 the chain is embedded in the membrane. At Lys-222–Lys-305 the chain is on the cytoplasmic side. The segment at Gly-306 to Ile-326 is a transmembrane helix. Residues Asn-327–Cys-361 lie on the Lumenal side of the membrane. Positions Ile-362–Phe-382 form a transmembrane segment. At Lys-383–Trp-450 the chain is on the cytoplasmic side. A membrane pass occupies residues Met-451–Val-471. The Lumenal segment spans residues Gln-472–Tyr-1395. Asn-490 carries an N-linked (GlcNAc...) asparagine; by host glycan. Residues Trp-1066–Asp-1087 form a fusion peptide region. Asn-1177 carries N-linked (GlcNAc...) asparagine; by host glycosylation. The hydrophobic stretch at Ile-1396–Leu-1416 threads the membrane. Topologically, residues Leu-1417–Ala-1433 are cytoplasmic.

This sequence belongs to the orthobunyaviruses M polyprotein family. Glycoprotein C and Glycoprotein N interact with each other.

The protein localises to the virion membrane. The protein resides in the host Golgi apparatus membrane. Its subcellular location is the host endoplasmic reticulum membrane. Glycoprotein C and glycoprotein N interact with each other and are present at the surface of the virion. They are able to attach the virion to a cell receptor and to promote fusion of membranes after endocytosis of the virion. This chain is Envelopment polyprotein (GP), found in Bunyavirus La Crosse (isolate Human/United States/L78/1978).